A 287-amino-acid chain; its full sequence is DegV domain-containing protein DR_0500 (287 aa).

The region spanning 7-280 (FAVVTDGGLD…PRALGVAAAP (274 aa)) is the DegV domain. Positions 62 and 93 each coordinate hexadecanoate.

Its function is as follows. May bind long-chain fatty acids, such as palmitate, and may play a role in lipid transport or fatty acid metabolism. The chain is DegV domain-containing protein DR_0500 from Deinococcus radiodurans (strain ATCC 13939 / DSM 20539 / JCM 16871 / CCUG 27074 / LMG 4051 / NBRC 15346 / NCIMB 9279 / VKM B-1422 / R1).